Here is a 504-residue protein sequence, read N- to C-terminus: MEEFQGYLELDIFRQHDFLYPLIFREYSYALAHGHGLNRYMLLENIGYDNKSSLLIVKRLITTMYQQNYLIISANDSKQNPFFGYNKNLHSKILSEGFAIIVEIPFYLRLISSLEGAEIVRFYNLRSIHSIFPFLEEKFPHLNYSADILIPYPAHLEILVQTLRYRVKDASYLHLLRFFLHEYSNCNSLIITNKSISIFSKSNPRFFLFLYNSYICEYESIFLFLRNQSSHLRLTSSGVLFERLCLYRKIEHFAEVFANDFPVIPCFLKDPFMHYVRYQGKSILASKDTPLLMNKWKSYLVNLWQCHFDVWSHAASIRINQLSKHSLDFLSYFSSVRRNPAVVRNQMLENSFLLNNAPNKLDTIVPIIPLIGSLAKAKFCNAVGHPISKLTRADLSDFEIINRFLHICRNLSHYYSGSSKKKNMYRIKYILRLSCVKTLARKHKSTARAFLKRVDSEFFQEFFTEEGGFISLIFPRASFALRRLYSGRVWYLDIIFINGLSNHE.

This sequence belongs to the intron maturase 2 family. MatK subfamily.

Its subcellular location is the plastid. The protein resides in the chloroplast. Functionally, usually encoded in the trnK tRNA gene intron. Probably assists in splicing its own and other chloroplast group II introns. In Quercus lyrata (Overcup oak), this protein is Maturase K.